Reading from the N-terminus, the 197-residue chain is MSKYTVKRASVLCIFGIGLFVPATGTFACGLLLVLGFWVLFFSSLLARFLSQFFMRTRSAPLFEVCLTLSATIMYDNLIQGFFPLVRMMLCPYLFITALSRTLDLCLTAYDADAESLECVGVFGIMIAGISLVRELVAFGCVSLPAPSGFLRIISFPPSNVIRFAATGAGTLISCGIVLWIFRSAGNDHTPSLRSEW.

The next 4 membrane-spanning stretches (helical) occupy residues 12–41 (LCIF…WVLF), 78–100 (LIQG…TALS), 120–142 (VGVF…FGCV), and 162–184 (IRFA…IFRS).

It localises to the cell membrane. This is an uncharacterized protein from Treponema pallidum (strain Nichols).